Consider the following 307-residue polypeptide: 4-hydroxy-3-methylbut-2-enyl diphosphate reductase (307 aa).

Residue C13 coordinates [4Fe-4S] cluster. Residues H42 and H75 each contribute to the (2E)-4-hydroxy-3-methylbut-2-enyl diphosphate site. Dimethylallyl diphosphate contacts are provided by H42 and H75. The isopentenyl diphosphate site is built by H42 and H75. C97 lines the [4Fe-4S] cluster pocket. H125 is a (2E)-4-hydroxy-3-methylbut-2-enyl diphosphate binding site. A dimethylallyl diphosphate-binding site is contributed by H125. H125 contacts isopentenyl diphosphate. Catalysis depends on E127, which acts as the Proton donor. T165 serves as a coordination point for (2E)-4-hydroxy-3-methylbut-2-enyl diphosphate. Residue C195 coordinates [4Fe-4S] cluster. Residues S223, S224, N225, and S267 each contribute to the (2E)-4-hydroxy-3-methylbut-2-enyl diphosphate site. S223, S224, N225, and S267 together coordinate dimethylallyl diphosphate. Residues S223, S224, N225, and S267 each contribute to the isopentenyl diphosphate site.

Belongs to the IspH family. The cofactor is [4Fe-4S] cluster.

It carries out the reaction isopentenyl diphosphate + 2 oxidized [2Fe-2S]-[ferredoxin] + H2O = (2E)-4-hydroxy-3-methylbut-2-enyl diphosphate + 2 reduced [2Fe-2S]-[ferredoxin] + 2 H(+). The catalysed reaction is dimethylallyl diphosphate + 2 oxidized [2Fe-2S]-[ferredoxin] + H2O = (2E)-4-hydroxy-3-methylbut-2-enyl diphosphate + 2 reduced [2Fe-2S]-[ferredoxin] + 2 H(+). It functions in the pathway isoprenoid biosynthesis; dimethylallyl diphosphate biosynthesis; dimethylallyl diphosphate from (2E)-4-hydroxy-3-methylbutenyl diphosphate: step 1/1. The protein operates within isoprenoid biosynthesis; isopentenyl diphosphate biosynthesis via DXP pathway; isopentenyl diphosphate from 1-deoxy-D-xylulose 5-phosphate: step 6/6. Catalyzes the conversion of 1-hydroxy-2-methyl-2-(E)-butenyl 4-diphosphate (HMBPP) into a mixture of isopentenyl diphosphate (IPP) and dimethylallyl diphosphate (DMAPP). Acts in the terminal step of the DOXP/MEP pathway for isoprenoid precursor biosynthesis. The chain is 4-hydroxy-3-methylbut-2-enyl diphosphate reductase from Chlamydia trachomatis serovar D (strain ATCC VR-885 / DSM 19411 / UW-3/Cx).